The primary structure comprises 119 residues: Phospholipase A2 A2-actitoxin-Cgg2a (119 aa).

6 disulfide bridges follow: cysteine 25/cysteine 119, cysteine 27/cysteine 43, cysteine 42/cysteine 101, cysteine 49/cysteine 94, cysteine 61/cysteine 87, and cysteine 78/cysteine 92. Ca(2+) is bound by residues glycine 28 and glycine 30. Histidine 46 is a catalytic residue. Aspartate 47 is a Ca(2+) binding site. Residue aspartate 95 is part of the active site.

The protein belongs to the phospholipase A2 family. In terms of assembly, homodimer. Ca(2+) is required as a cofactor.

The protein localises to the secreted. It is found in the nematocyst. The enzyme catalyses a 1,2-diacyl-sn-glycero-3-phosphocholine + H2O = a 1-acyl-sn-glycero-3-phosphocholine + a fatty acid + H(+). Sea anemone phospholipase A2 (PLA2). When incubated with plasma, this protein shows a moderate anticoagulant activity (0.15 ug of enzyme/200 uL of plasma), inhibiting clotting induced by thrombin. This enzyme also induces myotoxicity, and edema. PLA2 catalyzes the calcium-dependent hydrolysis of the 2-acyl groups in 3-sn-phosphoglycerides. The chain is Phospholipase A2 A2-actitoxin-Cgg2a from Condylactis gigantea (Giant Caribbean anemone).